The primary structure comprises 224 residues: tRNA (guanine-N(7)-)-methyltransferase (224 aa).

S-adenosyl-L-methionine-binding residues include Glu-57, Asp-82, and Asp-109. Asp-167 is a binding site for substrate.

The protein belongs to the class I-like SAM-binding methyltransferase superfamily. TrmB family.

The enzyme catalyses guanosine(46) in tRNA + S-adenosyl-L-methionine = N(7)-methylguanosine(46) in tRNA + S-adenosyl-L-homocysteine. It participates in tRNA modification; N(7)-methylguanine-tRNA biosynthesis. Its function is as follows. Catalyzes the formation of N(7)-methylguanine at position 46 (m7G46) in tRNA. In Chloroflexus aggregans (strain MD-66 / DSM 9485), this protein is tRNA (guanine-N(7)-)-methyltransferase.